Here is a 311-residue protein sequence, read N- to C-terminus: Transmembrane protein DDB_G0273707/DDB_G0273361 (311 aa).

A disordered region spans residues 1–113; sequence MNEIEVDNLS…NNNNNKNENN (113 aa). N8 carries N-linked (GlcNAc...) asparagine glycosylation. Positions 9 to 18 are enriched in polar residues; the sequence is LSHTNKNVAT. Residues N35, N38, N62, and N76 are each glycosylated (N-linked (GlcNAc...) asparagine). 2 stretches are compositionally biased toward low complexity: residues 37–67 and 76–111; these read SNNS…SNSN and NNSN…NKNE. Residues 95 to 124 adopt a coiled-coil conformation; it reads NNNNNNNNNNNNNNKNENNNKIKNEKINIL. The next 5 helical transmembrane spans lie at 150–170, 181–201, 208–228, 235–255, and 276–296; these read LEEI…LALL, IFLL…PKSP, LVLG…ALVY, VACA…KSIH, and FYYI…TALI.

The protein localises to the membrane. The sequence is that of Transmembrane protein DDB_G0273707/DDB_G0273361 from Dictyostelium discoideum (Social amoeba).